A 325-amino-acid polypeptide reads, in one-letter code: Protein translocase subunit SecF (325 aa).

6 helical membrane passes run 36-56, 148-168, 175-197, 202-224, 254-274, and 281-301; these read GYIL…TKGF, LAQG…IYVG, LGFG…FSAL, DLTF…IVVF, TIIT…FGGP, and LALL…AIAI.

It belongs to the SecD/SecF family. SecF subfamily. As to quaternary structure, forms a complex with SecD. Part of the essential Sec protein translocation apparatus which comprises SecA, SecYEG and auxiliary proteins SecDF-YajC and YidC.

Its subcellular location is the cell inner membrane. Its function is as follows. Part of the Sec protein translocase complex. Interacts with the SecYEG preprotein conducting channel. SecDF uses the proton motive force (PMF) to complete protein translocation after the ATP-dependent function of SecA. The protein is Protein translocase subunit SecF of Haemophilus influenzae (strain ATCC 51907 / DSM 11121 / KW20 / Rd).